A 396-amino-acid polypeptide reads, in one-letter code: Calreticulin (396 aa).

The signal sequence occupies residues Met-1 to Ala-15. A disulfide bridge links Cys-101 with Cys-133. An alpha-D-glucoside is bound by residues Tyr-105, Lys-107, Tyr-124, and Asp-131. 7 consecutive repeat copies span residues Ala-186–Leu-197, Asp-205–Glu-216, Asp-222–Lys-233, Asp-239–Asp-250, Gly-254–Pro-264, Gly-268–Pro-278, and Gly-282–Pro-292. Positions Ala-186–Asp-250 are 4 X approximate repeats. A P-domain region spans residues Glu-193–Tyr-301. Residues Lys-202–Glu-212 show a composition bias toward basic and acidic residues. The interval Lys-202–Asp-250 is disordered. Residues Asp-213–Glu-224 are compositionally biased toward acidic residues. The segment covering Asp-225–Glu-246 has biased composition (basic and acidic residues). The interval Gly-254–Pro-292 is 3 X approximate repeats. The interval Leu-302–Leu-396 is C-domain. Position 312 (Asp-312) interacts with an alpha-D-glucoside. Basic and acidic residues predominate over residues Phe-342–Asp-380. The tract at residues Phe-342–Leu-396 is disordered. Residues Asp-381–Leu-396 show a composition bias toward acidic residues. The Prevents secretion from ER signature appears at His-393–Leu-396.

The protein belongs to the calreticulin family.

It is found in the endoplasmic reticulum lumen. Functionally, molecular calcium-binding chaperone promoting folding, oligomeric assembly and quality control in the ER via the calreticulin/calnexin cycle. This lectin may interact transiently with almost all of the monoglucosylated glycoproteins that are synthesized in the ER. Probably by controlling the folding of extracellular matrix protein unc-52/Perlecan, may play a role in the formation of fibrous organelles, a hemidesmosome-like structure attaching muscles to the epidermis. Protects dopaminergic neurons against oxidative stress-induced neurodegeneration. The protein is Calreticulin (crt-1) of Caenorhabditis briggsae.